The following is a 142-amino-acid chain: Phosphoribosyl-AMP cyclohydrolase (142 aa).

Asp-85 is a binding site for Mg(2+). Cys-86 serves as a coordination point for Zn(2+). Mg(2+) contacts are provided by Asp-87 and Asp-89. Cys-102 and Cys-109 together coordinate Zn(2+). The interval 120-142 (GEPPTPVGAGERQPASGTADAAP) is disordered.

This sequence belongs to the PRA-CH family. Homodimer. Mg(2+) serves as cofactor. Requires Zn(2+) as cofactor.

It localises to the cytoplasm. It carries out the reaction 1-(5-phospho-beta-D-ribosyl)-5'-AMP + H2O = 1-(5-phospho-beta-D-ribosyl)-5-[(5-phospho-beta-D-ribosylamino)methylideneamino]imidazole-4-carboxamide. The protein operates within amino-acid biosynthesis; L-histidine biosynthesis; L-histidine from 5-phospho-alpha-D-ribose 1-diphosphate: step 3/9. Its function is as follows. Catalyzes the hydrolysis of the adenine ring of phosphoribosyl-AMP. In Acidothermus cellulolyticus (strain ATCC 43068 / DSM 8971 / 11B), this protein is Phosphoribosyl-AMP cyclohydrolase.